Reading from the N-terminus, the 535-residue chain is CTP synthase (535 aa).

Residues methionine 1–leucine 268 are amidoligase domain. Serine 14 is a CTP binding site. Serine 14 lines the UTP pocket. Serine 15 to isoleucine 20 serves as a coordination point for ATP. Tyrosine 55 serves as a coordination point for L-glutamine. Aspartate 72 contributes to the ATP binding site. Residues aspartate 72 and glutamate 142 each contribute to the Mg(2+) site. CTP contacts are provided by residues aspartate 149–glutamate 151, lysine 189–glutamine 194, and lysine 225. UTP is bound by residues lysine 189–glutamine 194 and lysine 225. Position 243 (valine 243) interacts with ATP. One can recognise a Glutamine amidotransferase type-1 domain in the interval lysine 293 to lysine 535. Glycine 355 is a binding site for L-glutamine. Residue cysteine 382 is the Nucleophile; for glutamine hydrolysis of the active site. L-glutamine-binding positions include leucine 383 to glutamine 386, glutamate 406, and arginine 464. Catalysis depends on residues histidine 509 and glutamate 511.

Belongs to the CTP synthase family. Homotetramer. In contrast to E.coli CTP synthase, remains a tetramer at dilute enzyme concentrations even in the absence of Mg(2+), ATP and UTP.

The enzyme catalyses UTP + L-glutamine + ATP + H2O = CTP + L-glutamate + ADP + phosphate + 2 H(+). The catalysed reaction is L-glutamine + H2O = L-glutamate + NH4(+). It catalyses the reaction UTP + NH4(+) + ATP = CTP + ADP + phosphate + 2 H(+). It functions in the pathway pyrimidine metabolism; CTP biosynthesis via de novo pathway; CTP from UDP: step 2/2. Its activity is regulated as follows. Allosterically activated by GTP, when glutamine is the substrate. GTP has no effect on the reaction when ammonia is the substrate. The allosteric effector GTP functions by stabilizing the protein conformation that binds the tetrahedral intermediate(s) formed during glutamine hydrolysis. Also activated by magnesium. Allosterically inhibited by CTP. Functionally, catalyzes the ATP-dependent amination of UTP to CTP with either L-glutamine or ammonia as the source of nitrogen. Is essential for the synthesis of CTP de novo. Contrary to other bacterial CTP synthases, the lactococcal enzyme is also able to convert dUTP to dCTP, but this reaction may not play a significant physiological role. Regulates intracellular CTP levels through interactions with the four ribonucleotide triphosphates. This Lactococcus lactis subsp. cremoris (strain MG1363) protein is CTP synthase.